Here is a 337-residue protein sequence, read N- to C-terminus: UbiA prenyltransferase domain-containing protein 1 (337 aa).

Ala2 bears the N-acetylalanine mark. The next 8 membrane-spanning stretches (helical) occupy residues 82 to 102, 133 to 153, 159 to 179, 187 to 207, 208 to 228, 244 to 266, 276 to 296, and 314 to 334; these read LLVGCAVAVLAVHGAGNLVNT, FGVFLYTLGCVCAACLYCLSP, LALIYFGGLSGSFLYTGGIGF, LVILITFGPLAVMFAYAVQVG, SLAVFPLVYAIPLALSTEAVL, IVTLAILIGPTLSYVLYNTLLFL, THCSISLALPLLTVPMAFSLE, and LNLLLGLFYVFGIILAPAGSL.

This sequence belongs to the UbiA prenyltransferase family. In terms of assembly, interacts with HMGCR and SOAT1.

Its subcellular location is the endoplasmic reticulum membrane. The protein localises to the golgi apparatus membrane. The protein resides in the mitochondrion membrane. The catalysed reaction is menadiol + (2E,6E,10E)-geranylgeranyl diphosphate = menaquinol-4 + diphosphate. It carries out the reaction all-trans-decaprenyl diphosphate + 4-hydroxybenzoate = 4-hydroxy-3-(all-trans-decaprenyl)benzoate + diphosphate. It participates in quinol/quinone metabolism; menaquinone biosynthesis. Its pathway is cofactor biosynthesis; ubiquinone biosynthesis. Functionally, prenyltransferase that mediates the formation of menaquinone-4 (MK-4) and coenzyme Q10. MK-4 is a vitamin K2 isoform required for endothelial cell development. Mediates the conversion of phylloquinone (PK) into MK-4, probably by cleaving the side chain of phylloquinone (PK) to release 2-methyl-1,4-naphthoquinone (menadione; K3) and then prenylating it with geranylgeranyl pyrophosphate (GGPP) to form MK-4. Also plays a role in cardiovascular development independently of MK-4 biosynthesis, by acting as a coenzyme Q10 biosynthetic enzyme: coenzyme Q10, also named ubiquinone, plays an important antioxidant role in the cardiovascular system. Mediates biosynthesis of coenzyme Q10 in the Golgi membrane, leading to protect cardiovascular tissues from NOS3/eNOS-dependent oxidative stress. This Ailuropoda melanoleuca (Giant panda) protein is UbiA prenyltransferase domain-containing protein 1 (UBIAD1).